The sequence spans 408 residues: Phosphopentomutase (408 aa).

Residues Asp10, Asp307, His312, Asp348, His349, and His360 each contribute to the Mn(2+) site.

The protein belongs to the phosphopentomutase family. Mn(2+) is required as a cofactor.

Its subcellular location is the cytoplasm. It catalyses the reaction 2-deoxy-alpha-D-ribose 1-phosphate = 2-deoxy-D-ribose 5-phosphate. The catalysed reaction is alpha-D-ribose 1-phosphate = D-ribose 5-phosphate. Its pathway is carbohydrate degradation; 2-deoxy-D-ribose 1-phosphate degradation; D-glyceraldehyde 3-phosphate and acetaldehyde from 2-deoxy-alpha-D-ribose 1-phosphate: step 1/2. Its function is as follows. Isomerase that catalyzes the conversion of deoxy-ribose 1-phosphate (dRib-1-P) and ribose 1-phosphate (Rib-1-P) to deoxy-ribose 5-phosphate (dRib-5-P) and ribose 5-phosphate (Rib-5-P), respectively. The protein is Phosphopentomutase of Proteus mirabilis (strain HI4320).